A 346-amino-acid polypeptide reads, in one-letter code: Holliday junction branch migration complex subunit RuvB (346 aa).

Residues 1–182 (MTRVISGEPQ…FGIPIRLEFY (182 aa)) form a large ATPase domain (RuvB-L) region. The ATP site is built by Leu21, Arg22, Gly63, Lys66, Thr67, Thr68, Arg172, Tyr182, and Arg219. Thr67 is a Mg(2+) binding site. A small ATPAse domain (RuvB-S) region spans residues 183 to 253 (TPAELRHVLQ…AAAMALARLE (71 aa)). Residues 256–346 (ESGLDSLDRR…QAQGALFDEG (91 aa)) are head domain (RuvB-H). 3 residues coordinate DNA: Arg292, Arg311, and Arg316.

The protein belongs to the RuvB family. Homohexamer. Forms an RuvA(8)-RuvB(12)-Holliday junction (HJ) complex. HJ DNA is sandwiched between 2 RuvA tetramers; dsDNA enters through RuvA and exits via RuvB. An RuvB hexamer assembles on each DNA strand where it exits the tetramer. Each RuvB hexamer is contacted by two RuvA subunits (via domain III) on 2 adjacent RuvB subunits; this complex drives branch migration. In the full resolvosome a probable DNA-RuvA(4)-RuvB(12)-RuvC(2) complex forms which resolves the HJ.

The protein localises to the cytoplasm. The catalysed reaction is ATP + H2O = ADP + phosphate + H(+). In terms of biological role, the RuvA-RuvB-RuvC complex processes Holliday junction (HJ) DNA during genetic recombination and DNA repair, while the RuvA-RuvB complex plays an important role in the rescue of blocked DNA replication forks via replication fork reversal (RFR). RuvA specifically binds to HJ cruciform DNA, conferring on it an open structure. The RuvB hexamer acts as an ATP-dependent pump, pulling dsDNA into and through the RuvAB complex. RuvB forms 2 homohexamers on either side of HJ DNA bound by 1 or 2 RuvA tetramers; 4 subunits per hexamer contact DNA at a time. Coordinated motions by a converter formed by DNA-disengaged RuvB subunits stimulates ATP hydrolysis and nucleotide exchange. Immobilization of the converter enables RuvB to convert the ATP-contained energy into a lever motion, pulling 2 nucleotides of DNA out of the RuvA tetramer per ATP hydrolyzed, thus driving DNA branch migration. The RuvB motors rotate together with the DNA substrate, which together with the progressing nucleotide cycle form the mechanistic basis for DNA recombination by continuous HJ branch migration. Branch migration allows RuvC to scan DNA until it finds its consensus sequence, where it cleaves and resolves cruciform DNA. This Caulobacter vibrioides (strain ATCC 19089 / CIP 103742 / CB 15) (Caulobacter crescentus) protein is Holliday junction branch migration complex subunit RuvB.